Consider the following 273-residue polypeptide: Neuferricin (273 aa).

An N-terminal signal peptide occupies residues 1-22; sequence MLGYLAAAALCLAAVLLMRLDH. A Cytochrome b5 heme-binding domain is found at 44–143; it reads GRLMSKEELS…QNYITIGKLT (100 aa).

Belongs to the cytochrome b5 family. MAPR subfamily.

It is found in the secreted. Its function is as follows. Heme-binding protein which promotes neuronal but not astrocyte differentiation. In Xenopus tropicalis (Western clawed frog), this protein is Neuferricin (cyb5d2).